Reading from the N-terminus, the 106-residue chain is MSVIKKNIPAIGLCICAFFIHSAVGQQTVQGGVIHFRGAIVEPLCDISTHAENIDLTCLREGKKQMHRIDLRQASGLPQDIQSIATVRLHYLDAQKSLAVMNIEYR.

Residues 1–25 form the signal peptide; that stretch reads MSVIKKNIPAIGLCICAFFIHSAVG.

The protein to the N-terminal of the FimA/PapA family of fimbria proteins.

This is an uncharacterized protein from Salmonella typhi.